Here is a 271-residue protein sequence, read N- to C-terminus: uncharacterized protein (271 aa).

This sequence belongs to the anhydro-N-acetylmuramic acid kinase family.

This is an uncharacterized protein from Yersinia enterocolitica.